A 156-amino-acid chain; its full sequence is Ribosomal RNA large subunit methyltransferase H (156 aa).

S-adenosyl-L-methionine is bound by residues leucine 73, glycine 104, and 123–128 (ISSMTL).

This sequence belongs to the RNA methyltransferase RlmH family. As to quaternary structure, homodimer.

The protein localises to the cytoplasm. The catalysed reaction is pseudouridine(1915) in 23S rRNA + S-adenosyl-L-methionine = N(3)-methylpseudouridine(1915) in 23S rRNA + S-adenosyl-L-homocysteine + H(+). Functionally, specifically methylates the pseudouridine at position 1915 (m3Psi1915) in 23S rRNA. In Burkholderia multivorans (strain ATCC 17616 / 249), this protein is Ribosomal RNA large subunit methyltransferase H.